The primary structure comprises 203 residues: Small ribosomal subunit protein uS4 (203 aa).

The tract at residues 22–45 (TGKELARRPYKPGQHGPNSRGKVS) is disordered. The S4 RNA-binding domain maps to 93–156 (QRLDNVVYRL…QNISTIKEAV (64 aa)).

Belongs to the universal ribosomal protein uS4 family. As to quaternary structure, part of the 30S ribosomal subunit. Contacts protein S5. The interaction surface between S4 and S5 is involved in control of translational fidelity.

Functionally, one of the primary rRNA binding proteins, it binds directly to 16S rRNA where it nucleates assembly of the body of the 30S subunit. Its function is as follows. With S5 and S12 plays an important role in translational accuracy. The chain is Small ribosomal subunit protein uS4 from Enterococcus faecalis (strain ATCC 700802 / V583).